Reading from the N-terminus, the 444-residue chain is Adenylosuccinate synthetase (444 aa).

Residues 19 to 25 and 47 to 49 contribute to the GTP site; these read GDEGKGK and GHT. D20 functions as the Proton acceptor in the catalytic mechanism. Residues D20 and G47 each coordinate Mg(2+). IMP is bound by residues 20 to 23, 45 to 48, T139, R153, Q234, T249, and R317; these read DEGK and NAGH. The active-site Proton donor is the H48. Position 313–319 (313–319) interacts with substrate; sequence TVTGRPR. Residues R319, 345–347, and 427–429 contribute to the GTP site; these read KLD and STG.

This sequence belongs to the adenylosuccinate synthetase family. Homodimer. Mg(2+) serves as cofactor.

Its subcellular location is the cytoplasm. It carries out the reaction IMP + L-aspartate + GTP = N(6)-(1,2-dicarboxyethyl)-AMP + GDP + phosphate + 2 H(+). It participates in purine metabolism; AMP biosynthesis via de novo pathway; AMP from IMP: step 1/2. Plays an important role in the de novo pathway of purine nucleotide biosynthesis. Catalyzes the first committed step in the biosynthesis of AMP from IMP. This chain is Adenylosuccinate synthetase, found in Methylibium petroleiphilum (strain ATCC BAA-1232 / LMG 22953 / PM1).